The following is a 692-amino-acid chain: Elongation factor G (692 aa).

Positions 8-283 constitute a tr-type G domain; the sequence is KNTRNIGIMA…AVVDYLPSPV (276 aa). Residues 17–24, 81–85, and 135–138 each bind GTP; these read AHIDAGKT, DTPGH, and NKMD.

Belongs to the TRAFAC class translation factor GTPase superfamily. Classic translation factor GTPase family. EF-G/EF-2 subfamily.

It localises to the cytoplasm. In terms of biological role, catalyzes the GTP-dependent ribosomal translocation step during translation elongation. During this step, the ribosome changes from the pre-translocational (PRE) to the post-translocational (POST) state as the newly formed A-site-bound peptidyl-tRNA and P-site-bound deacylated tRNA move to the P and E sites, respectively. Catalyzes the coordinated movement of the two tRNA molecules, the mRNA and conformational changes in the ribosome. In Exiguobacterium sp. (strain ATCC BAA-1283 / AT1b), this protein is Elongation factor G.